The chain runs to 352 residues: C-C chemokine receptor type 5 (352 aa).

Residues 1–30 (MDYQVSSPIYDIDYGASEPCRKTDVKQMGA) lie on the Extracellular side of the membrane. A Sulfotyrosine modification is found at tyrosine 3. Serine 6 and serine 7 each carry an O-linked (GalNAc...) serine glycan. Sulfotyrosine is present on residues tyrosine 10 and tyrosine 14. Cystine bridges form between cysteine 20/cysteine 269 and cysteine 101/cysteine 178. The helical transmembrane segment at 31–58 (HLLPPLYSMVFLFGFVGNMLVVLILVNC) threads the bilayer. The Cytoplasmic segment spans residues 59-68 (KRPKSMTDIY). A helical membrane pass occupies residues 69–89 (LLNLAISDLLFLFTVPFWAHY). The Extracellular portion of the chain corresponds to 90 to 102 (AAGQWDFGNTMCQ). The helical transmembrane segment at 103 to 124 (FLTGLYFIGFFSGIFFIILLTI) threads the bilayer. Residues 125 to 141 (DRYLAIVHAVFALKART) lie on the Cytoplasmic side of the membrane. A helical transmembrane segment spans residues 142–166 (VTFGVMTSVITWVVAVFASLPGIIF). The Extracellular portion of the chain corresponds to 167–198 (TRSQKEGYHYTCSPHFPFGQYQFWKNFETLKM). Residues 199-218 (VILGLVLPLLVMVICYSGIL) traverse the membrane as a helical segment. The Cytoplasmic portion of the chain corresponds to 219–235 (KTLLRCRNEKKRHRAVR). The chain crosses the membrane as a helical span at residues 236–260 (LIFTIMIVYFLFWAPYNIVLLLNTY). Residues 261–277 (QEFFGLNNCSSSNRLDQ) are Extracellular-facing. The helical transmembrane segment at 278–301 (AMQVTETLGMTHCCVNPIIYAFVG) threads the bilayer. Over 302-352 (EKFRNYLLVFFQKHIAKCFCECCSIFQKEAPERANSVYTRSTGEQEISVGL) the chain is Cytoplasmic. 3 S-palmitoyl cysteine lipidation sites follow: cysteine 321, cysteine 323, and cysteine 324. Residues serine 337, serine 342, and serine 349 each carry the phosphoserine; by BARK1 modification.

It belongs to the G-protein coupled receptor 1 family. In terms of assembly, interacts with PRAF2. Efficient ligand binding to CCL3/MIP-1alpha and CCL4/MIP-1beta requires sulfation, O-glycosylation and sialic acid modifications. Glycosylation on Ser-6 is required for efficient binding of CCL4. Interacts with GRK2. Interacts with ARRB1 and ARRB2. Interacts with CNIH4. Interacts with S100A4; this interaction stimulates T-lymphocyte chemotaxis. Sulfated on at least 2 of the N-terminal tyrosines. Sulfation is required for efficient binding of the chemokines, CCL3 and CCL4. In terms of processing, palmitoylation in the C-terminal is important for cell surface expression. Post-translationally, phosphorylation on serine residues in the C-terminal is stimulated by binding CC chemokines especially by APO-RANTES. O-glycosylated, but not N-glycosylated. Ser-6 appears to be the major site even if Ser-7 may be also O-glycosylated. Also sialylated glycans present which contribute to chemokine binding. Ser-17 may also be glycosylated and, if so, with small moieties such as a T-antigen.

The protein resides in the cell membrane. Its function is as follows. Receptor for a number of inflammatory CC-chemokines including CCL3/MIP-1-alpha, CCL4/MIP-1-beta and RANTES and subsequently transduces a signal by increasing the intracellular calcium ion level. May play a role in the control of granulocytic lineage proliferation or differentiation. Participates in T-lymphocyte migration to the infection site by acting as a chemotactic receptor. The protein is C-C chemokine receptor type 5 (CCR5) of Ateles geoffroyi (Black-handed spider monkey).